Consider the following 554-residue polypeptide: Protein NODULATION SIGNALING PATHWAY 1 (554 aa).

The segment at 76–165 (TTSTTSLEPN…NSNNGNNKDG (90 aa)) is disordered. Polar residues predominate over residues 82–91 (LEPNSFNNIP). The segment covering 95–107 (LPKKRNAEDELSL) has biased composition (basic and acidic residues). A compositionally biased stretch (low complexity) spans 150-162 (AKANGSNSNNGNN). The GRAS domain maps to 159–548 (NGNNKDGRWA…QPVSFCSLWK (390 aa)). The leucine repeat I (LRI) stretch occupies residues 166–227 (RWAEQLLNPC…HHLSSSSSST (62 aa)). The VHIID stretch occupies residues 246–315 (LLKFYEFSPW…GGPPPLVRLT (70 aa)). Positions 281 to 285 (LHILD) match the VHIID motif. Residues 331 to 373 (TPFSIGPCGDTFSSGLLGYAQSLNVNLQIKKLDNHPLQTLNAK) form a leucine repeat II (LRII) region. The segment at 383–468 (LIVCAQFRLH…RDSDERKMME (86 aa)) is PFYRE. The interval 471–548 (AAKALTNQRE…QPVSFCSLWK (78 aa)) is SAW.

Belongs to the GRAS family. As to expression, expressed in epidermal and cortical root cells.

It localises to the nucleus. Transcriptional regulator essential for Nod-factor-induced gene expression. Acts downstream of calcium spiking. May be a target of DMI3, a calcium/calmodulin-dependent protein kinase (CCaMK). Is essential for Nod factor-elicited expression of ERN1. Transcription factor involved in the control of strigolactone biosynthesis in roots through the activation of the beta-carotene isomerase D27, which participates in a pathway leading to biosynthesis of strigolactones. The sequence is that of Protein NODULATION SIGNALING PATHWAY 1 from Medicago truncatula (Barrel medic).